The following is a 432-amino-acid chain: Adenylosuccinate synthetase (432 aa).

Residues 13–19 (GDEGKGK) and 41–43 (GHT) contribute to the GTP site. Residue aspartate 14 is the Proton acceptor of the active site. Mg(2+)-binding residues include aspartate 14 and glycine 41. IMP-binding positions include 14–17 (DEGK), 39–42 (NAGH), threonine 130, arginine 144, glutamine 225, threonine 240, and arginine 304. The Proton donor role is filled by histidine 42. Residue 300–306 (ATTGRRR) participates in substrate binding. GTP contacts are provided by residues arginine 306, 332–334 (KLD), and 414–416 (STG).

Belongs to the adenylosuccinate synthetase family. In terms of assembly, homodimer. The cofactor is Mg(2+).

It localises to the cytoplasm. It catalyses the reaction IMP + L-aspartate + GTP = N(6)-(1,2-dicarboxyethyl)-AMP + GDP + phosphate + 2 H(+). It participates in purine metabolism; AMP biosynthesis via de novo pathway; AMP from IMP: step 1/2. Functionally, plays an important role in the de novo pathway of purine nucleotide biosynthesis. Catalyzes the first committed step in the biosynthesis of AMP from IMP. This chain is Adenylosuccinate synthetase, found in Methylococcus capsulatus (strain ATCC 33009 / NCIMB 11132 / Bath).